The sequence spans 230 residues: Probable endonuclease C19F8.04c (230 aa).

A helical membrane pass occupies residues 10-27 (AIIGTGLITTSIGGFFFL). Positions 55 to 216 (KTMFGYVTRV…KKKKLSLWSQ (162 aa)) constitute a TNase-like domain. The active site involves arginine 104. Aspartate 109 contributes to the Ca(2+) binding site. Catalysis depends on residues glutamate 112 and arginine 152.

The protein belongs to the LCL3 family.

It localises to the mitochondrion. Its subcellular location is the membrane. This is Probable endonuclease C19F8.04c from Schizosaccharomyces pombe (strain 972 / ATCC 24843) (Fission yeast).